Here is a 296-residue protein sequence, read N- to C-terminus: Sperm-activating peptides (296 aa).

3 consecutive propeptides follow at residues 1–134, 146–190, and 290–296; these read MPPG…MYKK, MLSN…MILK, and EVEIKDW.

Its function is as follows. Causes stimulation of sperm respiration and motility through intracellular alkalinization, transient elevations of cAMP, cGMP and calcium levels in sperm cells, and transient activation and subsequent inactivation of the membrane form of guanylate cyclase. This Strongylocentrotus purpuratus (Purple sea urchin) protein is Sperm-activating peptides.